Reading from the N-terminus, the 84-residue chain is Large ribosomal subunit protein bL31B (84 aa).

This sequence belongs to the bacterial ribosomal protein bL31 family. Type B subfamily. As to quaternary structure, part of the 50S ribosomal subunit.

The sequence is that of Large ribosomal subunit protein bL31B from Acinetobacter baumannii (strain AB307-0294).